Reading from the N-terminus, the 511-residue chain is Maturase K (511 aa).

It belongs to the intron maturase 2 family. MatK subfamily.

Its subcellular location is the plastid. It is found in the chloroplast. In terms of biological role, usually encoded in the trnK tRNA gene intron. Probably assists in splicing its own and other chloroplast group II introns. This is Maturase K from Primula veris (Cowslip).